The chain runs to 80 residues: Sulfur carrier protein TusA (80 aa).

Cys17 functions as the Cysteine persulfide intermediate in the catalytic mechanism.

It belongs to the sulfur carrier protein TusA family.

The protein resides in the cytoplasm. Sulfur carrier protein which probably makes part of a sulfur-relay system. The protein is Sulfur carrier protein TusA of Pseudomonas putida (strain GB-1).